A 434-amino-acid chain; its full sequence is Mitochondrial distribution and morphology protein 12 (434 aa).

The 434-residue stretch at 1–434 folds into the SMP-LTD domain; it reads MSIDIDWERA…VYPSFWTFLV (434 aa). A compositionally biased stretch (acidic residues) spans 70 to 83; that stretch reads YEEDDNENFSESSE. Disordered stretches follow at residues 70–141 and 181–275; these read YEED…LRSP and TPLG…DDLP. The segment covering 86 to 97 has biased composition (basic and acidic residues); sequence SPTREPVDRYGS. Residues 215-237 are compositionally biased toward polar residues; sequence SAQSRPSTANTGNTLLSRGSMSS.

Belongs to the MDM12 family. As to quaternary structure, component of the ER-mitochondria encounter structure (ERMES) or MDM complex, composed of MMM1, MDM10, MDM12 and MDM34. An MMM1 homodimer associates with one molecule of MDM12 on each side in a pairwise head-to-tail manner, and the SMP-LTD domains of MMM1 and MDM12 generate a continuous hydrophobic tunnel for phospholipid trafficking.

The protein resides in the mitochondrion outer membrane. Its subcellular location is the endoplasmic reticulum membrane. Its function is as follows. Component of the ERMES/MDM complex, which serves as a molecular tether to connect the endoplasmic reticulum (ER) and mitochondria. Components of this complex are involved in the control of mitochondrial shape and protein biogenesis, and function in nonvesicular lipid trafficking between the ER and mitochondria. MDM12 is required for the interaction of the ER-resident membrane protein MMM1 and the outer mitochondrial membrane-resident beta-barrel protein MDM10. The MDM12-MMM1 subcomplex functions in the major beta-barrel assembly pathway that is responsible for biogenesis of all mitochondrial outer membrane beta-barrel proteins, and acts in a late step after the SAM complex. The MDM10-MDM12-MMM1 subcomplex further acts in the TOM40-specific pathway after the action of the MDM12-MMM1 complex. Essential for establishing and maintaining the structure of mitochondria and maintenance of mtDNA nucleoids. The polypeptide is Mitochondrial distribution and morphology protein 12 (Blastomyces gilchristii (strain SLH14081) (Blastomyces dermatitidis)).